We begin with the raw amino-acid sequence, 193 residues long: Bcl-2-like protein 2 (193 aa).

An N-acetylalanine modification is found at alanine 2. The BH4 motif lies at 9 to 29 (DTRALVADFVGYKLRQKGYVC). Residues 85 to 104 (ELFQGGPNWGRLVAFFVFGA) carry the BH1 motif. Residues 136-151 (DWIHSSGGWAEFTALY) carry the BH2 motif. Phosphoserine is present on alanine 177.

This sequence belongs to the Bcl-2 family. As to quaternary structure, interacts with HIF3A (via C-terminus domain). Interacts with BOP. In terms of tissue distribution, expressed (at protein level) in a wide range of tissues with highest levels in brain, spinal cord, testis, pancreas, heart, spleen and mammary glands. Moderate levels found in thymus, ovary and small intestine. Not detected in salivary gland, muscle or liver. Also expressed in cell lines of myeloid, fibroblast and epithelial origin. Not detected in most lymphoid cell lines.

It localises to the mitochondrion membrane. Promotes cell survival. Blocks dexamethasone-induced apoptosis. Mediates survival of postmitotic Sertoli cells by suppressing death-promoting activity of BAX. The protein is Bcl-2-like protein 2 (BCL2L2) of Homo sapiens (Human).